The primary structure comprises 359 residues: Peptide chain release factor 1 (359 aa).

N5-methylglutamine is present on Q236.

This sequence belongs to the prokaryotic/mitochondrial release factor family. In terms of processing, methylated by PrmC. Methylation increases the termination efficiency of RF1.

The protein resides in the cytoplasm. In terms of biological role, peptide chain release factor 1 directs the termination of translation in response to the peptide chain termination codons UAG and UAA. The chain is Peptide chain release factor 1 from Streptococcus pyogenes serotype M18 (strain MGAS8232).